A 482-amino-acid chain; its full sequence is Glutamate synthase [NADPH] small chain (482 aa).

A 4Fe-4S ferredoxin-type domain is found at 39-72 (ERANEQANRCSQCGVPFCQVHCPVSNNIPDWLKL). Positions 95, 99, 105, and 109 each coordinate [4Fe-4S] cluster.

In terms of assembly, aggregate of 4 catalytic active heterodimers, consisting of a large and a small subunit. [4Fe-4S] cluster serves as cofactor.

It catalyses the reaction 2 L-glutamate + NADP(+) = L-glutamine + 2-oxoglutarate + NADPH + H(+). It functions in the pathway amino-acid biosynthesis; L-glutamate biosynthesis via GLT pathway; L-glutamate from 2-oxoglutarate and L-glutamine (NADP(+) route): step 1/1. Its pathway is energy metabolism; nitrogen metabolism. The sequence is that of Glutamate synthase [NADPH] small chain (gltD) from Azospirillum brasilense.